The following is a 195-amino-acid chain: Nucleoside triphosphate pyrophosphatase (195 aa).

Asp-76 acts as the Proton acceptor in catalysis.

This sequence belongs to the Maf family. A divalent metal cation is required as a cofactor.

It is found in the cytoplasm. The enzyme catalyses a ribonucleoside 5'-triphosphate + H2O = a ribonucleoside 5'-phosphate + diphosphate + H(+). It carries out the reaction a 2'-deoxyribonucleoside 5'-triphosphate + H2O = a 2'-deoxyribonucleoside 5'-phosphate + diphosphate + H(+). In terms of biological role, nucleoside triphosphate pyrophosphatase. May have a dual role in cell division arrest and in preventing the incorporation of modified nucleotides into cellular nucleic acids. The protein is Nucleoside triphosphate pyrophosphatase of Pelagibacter ubique (strain HTCC1062).